Here is a 292-residue protein sequence, read N- to C-terminus: Ventral anterior homeobox 2 (292 aa).

Residues 1–36 (MGDGGAERDRGPKRREEPGGRSGCRGEHRGAEDLRA) are compositionally biased toward basic and acidic residues. The disordered stretch occupies residues 1–74 (MGDGGAERDR…DGQQALGETD (74 aa)). The span at 38–55 (TGSTSPREIAGTSASSPA) shows a compositional bias: polar residues. Positions 102–161 (PKRTRTSFTAEQLYRLEMEFQRCQYVVGRERTELARQLNLSETQVKVWFQNRRTKQKKDQ) form a DNA-binding region, homeobox. The segment at 212–241 (AGHRGTSLGDPRNSSQRLNPMPSASASSPL) is disordered.

The protein belongs to the EMX homeobox family.

Its subcellular location is the nucleus. Transcription factor that may function in dorsoventral specification of the forebrain. Regulates the expression of Wnt signaling antagonists including the expression of a truncated TCF7L2 isoform that cannot bind CTNNB1 and acts therefore as a potent dominant-negative Wnt antagonist. Plays a crucial role in eye development and, in particular, in the specification of the ventral optic vesicle. May be a regulator of axial polarization in the retina. The chain is Ventral anterior homeobox 2 (Vax2) from Rattus norvegicus (Rat).